We begin with the raw amino-acid sequence, 458 residues long: Monomethylamine methyltransferase MtmB2 (458 aa).

Pyrrolysine 202 is a non-standard amino acid (pyrrolysine).

Belongs to the monomethylamine methyltransferase family. In terms of assembly, can form a complex with MtmC.

It carries out the reaction Co(I)-[methylamine-specific corrinoid protein] + methylamine + H(+) = methyl-Co(III)-[methylamine-specific corrinoid protein] + NH4(+). The protein operates within one-carbon metabolism; methanogenesis from methylamine. Catalyzes the transfer of the methyl group from monomethylamine to the corrinoid cofactor of MtmC. This is Monomethylamine methyltransferase MtmB2 (mtmB2) from Methanosarcina acetivorans (strain ATCC 35395 / DSM 2834 / JCM 12185 / C2A).